The sequence spans 104 residues: Enhancer of rudimentary homolog (104 aa).

Ser2 is modified (N-acetylserine). A Phosphothreonine modification is found at Thr11. Lys12 is covalently cross-linked (Glycyl lysine isopeptide (Lys-Gly) (interchain with G-Cter in SUMO2)).

This sequence belongs to the E(R) family. As to quaternary structure, homodimer.

The protein resides in the nucleus. Functionally, may have a role in the cell cycle. This chain is Enhancer of rudimentary homolog (ERH), found in Bos taurus (Bovine).